Reading from the N-terminus, the 556-residue chain is Formate--tetrahydrofolate ligase (556 aa).

Residue 65-72 coordinates ATP; sequence TPAGEGKS.

The protein belongs to the formate--tetrahydrofolate ligase family.

The catalysed reaction is (6S)-5,6,7,8-tetrahydrofolate + formate + ATP = (6R)-10-formyltetrahydrofolate + ADP + phosphate. Its pathway is one-carbon metabolism; tetrahydrofolate interconversion. The polypeptide is Formate--tetrahydrofolate ligase (Clostridium botulinum (strain Alaska E43 / Type E3)).